The chain runs to 242 residues: MQQFEEVHSILEKAKKITVLTGAGASTESGIPDFRSANGLYADANVEMYLSRGYYNRSPKEFWKHYKEIFQINTFHQYKPNRGHRFLAELEEQGKDITILTQNIDGLHQLGGSKHVIDLHGTLQTAHCPKCKAGYDLQYMIDHEVPRCEKCNFILNPDVVLYGDTLPQYQNAVKRLYETDVLIVMGTSLKVQPVASFPQIAKREVGATTILVNEELTGQEYNFDYVFQNKIGEFVEGLSSRK.

The Deacetylase sirtuin-type domain maps to 1–242; sequence MQQFEEVHSI…EFVEGLSSRK (242 aa). Residues A23, T27, F34, R35, Q102, I104, D105, and H120 each coordinate NAD(+). Residue F34 coordinates nicotinamide. I104 and D105 together coordinate nicotinamide. H120 (proton acceptor) is an active-site residue. Zn(2+)-binding residues include C128, C131, C148, and C151. T187, S188, N213, and I231 together coordinate NAD(+).

This sequence belongs to the sirtuin family. Class U subfamily. The cofactor is Zn(2+).

Its subcellular location is the cytoplasm. The enzyme catalyses N(6)-acetyl-L-lysyl-[protein] + NAD(+) + H2O = 2''-O-acetyl-ADP-D-ribose + nicotinamide + L-lysyl-[protein]. Its function is as follows. NAD-dependent protein deacetylase which modulates the activities of several enzymes which are inactive in their acetylated form. This is NAD-dependent protein deacetylase from Bacillus cereus (strain ATCC 10987 / NRS 248).